The chain runs to 230 residues: Thymidylate kinase (230 aa).

An ATP-binding site is contributed by 23–30 (GIDGAGKT).

The protein belongs to the thymidylate kinase family.

The catalysed reaction is dTMP + ATP = dTDP + ADP. Its function is as follows. Phosphorylation of dTMP to form dTDP in both de novo and salvage pathways of dTTP synthesis. This chain is Thymidylate kinase, found in Ureaplasma parvum serovar 3 (strain ATCC 27815 / 27 / NCTC 11736).